Reading from the N-terminus, the 147-residue chain is Endoribonuclease YbeY (147 aa).

Histidine 108, histidine 112, and histidine 118 together coordinate Zn(2+).

The protein belongs to the endoribonuclease YbeY family. Requires Zn(2+) as cofactor.

It localises to the cytoplasm. Single strand-specific metallo-endoribonuclease involved in late-stage 70S ribosome quality control and in maturation of the 3' terminus of the 16S rRNA. This Sulfurovum sp. (strain NBC37-1) protein is Endoribonuclease YbeY.